The chain runs to 188 residues: Acireductone dioxygenase (188 aa).

4 residues coordinate Fe(2+): histidine 97, histidine 99, glutamate 103, and histidine 141. Positions 97, 99, 103, and 141 each coordinate Ni(2+).

This sequence belongs to the acireductone dioxygenase (ARD) family. As to quaternary structure, monomer. Fe(2+) serves as cofactor. The cofactor is Ni(2+).

It catalyses the reaction 1,2-dihydroxy-5-(methylsulfanyl)pent-1-en-3-one + O2 = 3-(methylsulfanyl)propanoate + CO + formate + 2 H(+). The catalysed reaction is 1,2-dihydroxy-5-(methylsulfanyl)pent-1-en-3-one + O2 = 4-methylsulfanyl-2-oxobutanoate + formate + 2 H(+). It functions in the pathway amino-acid biosynthesis; L-methionine biosynthesis via salvage pathway; L-methionine from S-methyl-5-thio-alpha-D-ribose 1-phosphate: step 5/6. In terms of biological role, catalyzes 2 different reactions between oxygen and the acireductone 1,2-dihydroxy-3-keto-5-methylthiopentene (DHK-MTPene) depending upon the metal bound in the active site. Fe-containing acireductone dioxygenase (Fe-ARD) produces formate and 2-keto-4-methylthiobutyrate (KMTB), the alpha-ketoacid precursor of methionine in the methionine recycle pathway. Ni-containing acireductone dioxygenase (Ni-ARD) produces methylthiopropionate, carbon monoxide and formate, and does not lie on the methionine recycle pathway. The sequence is that of Acireductone dioxygenase from Xylella fastidiosa (strain M23).